The chain runs to 365 residues: 3-isopropylmalate dehydrogenase (365 aa).

76 to 89 (GPKWDQNPSELRPE) is an NAD(+) binding site. Residues Arg-96, Arg-106, Arg-134, and Asp-224 each coordinate substrate. Mg(2+) contacts are provided by Asp-224, Asp-248, and Asp-252. 282 to 294 (GSAPDIAGKGMAN) provides a ligand contact to NAD(+).

This sequence belongs to the isocitrate and isopropylmalate dehydrogenases family. LeuB type 1 subfamily. Homodimer. Mg(2+) is required as a cofactor. The cofactor is Mn(2+).

The protein resides in the cytoplasm. It carries out the reaction (2R,3S)-3-isopropylmalate + NAD(+) = 4-methyl-2-oxopentanoate + CO2 + NADH. The protein operates within amino-acid biosynthesis; L-leucine biosynthesis; L-leucine from 3-methyl-2-oxobutanoate: step 3/4. Functionally, catalyzes the oxidation of 3-carboxy-2-hydroxy-4-methylpentanoate (3-isopropylmalate) to 3-carboxy-4-methyl-2-oxopentanoate. The product decarboxylates to 4-methyl-2 oxopentanoate. This Bacillus subtilis (strain 168) protein is 3-isopropylmalate dehydrogenase (leuB).